The primary structure comprises 554 residues: Condensin-2 complex subunit H2 (554 aa).

Residues Ser-45, Ser-178, Ser-182, Ser-199, and Ser-200 each carry the phosphoserine modification. The tract at residues 154 to 296 is disordered; that stretch reads PVDVHPMPRS…GQKRKRKGAT (143 aa). Over residues 179-191 the composition is skewed to polar residues; it reads RNGSPVSVRSISQ. A compositionally biased stretch (acidic residues) spans 201-210; sequence GDEDAEDVAE. At Ser-441 the chain carries Phosphoserine.

The protein belongs to the CND2 H2 (condensin-2 subunit 2) family. As to quaternary structure, component of the condensin-2 complex, which contains the SMC2 and SMC4 heterodimer, and three non SMC subunits, NCAPG2, NCAPH2 and NCAPD3 that probably regulate the complex.

It localises to the nucleus. Functionally, regulatory subunit of the condensin-2 complex, a complex that seems to provide chromosomes with an additional level of organization and rigidity and in establishing mitotic chromosome architecture. May promote the resolution of double-strand DNA catenanes (intertwines) between sister chromatids. Condensin-mediated compaction likely increases tension in catenated sister chromatids, providing directionality for type II topoisomerase-mediated strand exchanges toward chromatid decatenation. Required for decatenation of chromatin bridges at anaphase. Early in neurogenesis, may play an essential role to ensure accurate mitotic chromosome condensation in neuron stem cells, ultimately affecting neuron pool and cortex size. Seems to have lineage-specific role in T-cell development. The polypeptide is Condensin-2 complex subunit H2 (Ncaph2) (Rattus norvegicus (Rat)).